Reading from the N-terminus, the 650-residue chain is Chaperone protein DnaK (650 aa).

A Phosphothreonine; by autocatalysis modification is found at threonine 200. The segment at 613–634 (QAGAAGAAGAAEGAAHAGGAQQ) is disordered.

It belongs to the heat shock protein 70 family.

Its function is as follows. Acts as a chaperone. The polypeptide is Chaperone protein DnaK (Burkholderia vietnamiensis (strain G4 / LMG 22486) (Burkholderia cepacia (strain R1808))).